Reading from the N-terminus, the 505-residue chain is Poxin-Schlafen (505 aa).

Residues 1–238 (MAMFYAHAFG…SKEERVDYVL (238 aa)) are poxin-like. His17 acts as the Proton donor in catalysis. Tyr138 acts as the Shared with catalytic histidine of dimeric partner in catalysis. The active-site Proton acceptor; shared with catalytic histidine of dimeric partner is Lys142. The schlafen-like stretch occupies residues 239–505 (MKRLESIRHL…PDEWVSHIKF (267 aa)).

This sequence in the N-terminal section; belongs to the poxin family. In the C-terminal section; belongs to the Schlafen protein family. Subgroup poxviridae B3 subfamily. In terms of assembly, homodimer.

It carries out the reaction 2',3'-cGAMP + H2O = Gp(2'-5')Ap(3') + H(+). Nuclease that is responsible for viral evasion of host cGAS-STING innate immunity. Cleaves 2',3'-cGAMP which is produced by host cGAS following recognition of cytosolic DNA and blocks the subsequent 2',3'-cGAMP-mediated activation of TMEM173/STING, which normally spreads to adjacent cells and activates the interferon and NF-kappa-B immune responses. The polypeptide is Poxin-Schlafen (OPG188) (Bos taurus (Bovine)).